A 572-amino-acid polypeptide reads, in one-letter code: Probable cysteine--tRNA ligase, mitochondrial (572 aa).

Cys81 contacts Zn(2+). Gly82 lines the L-cysteine pocket. Positions 83 to 93 (PTVYDHAHLGH) match the 'HIGH' region motif. Residue Thr122 participates in L-cysteine binding. Positions 127-130 (KIIK) match the 'KIIK' region motif. Zn(2+) contacts are provided by Cys260, His285, and Glu289. His285 provides a ligand contact to L-cysteine. The 'KMSKS' region signature appears at 320–324 (KMSKS). ATP is bound at residue Lys323.

Belongs to the class-I aminoacyl-tRNA synthetase family. The cofactor is Zn(2+).

It localises to the mitochondrion. It carries out the reaction tRNA(Cys) + L-cysteine + ATP = L-cysteinyl-tRNA(Cys) + AMP + diphosphate. The enzyme catalyses 2 L-cysteine = S-sulfanyl-L-cysteine + L-alanine. The catalysed reaction is S-sulfanyl-L-cysteine + L-cysteine = S-disulfanyl-L-cysteine + L-alanine. It catalyses the reaction S-sulfanyl-L-cysteine + tRNA(Cys) + ATP = (S)-sulfanyl-L-cysteinyl-tRNA(Cys) + AMP + diphosphate. It carries out the reaction S-disulfanyl-L-cysteine + tRNA(Cys) + ATP = (S)-disulfanyl-L-cysteinyl-tRNA(Cys) + AMP + diphosphate. Functionally, mitochondrial cysteine-specific aminoacyl-tRNA synthetase that catalyzes the ATP-dependent ligation of cysteine to tRNA(Cys). In terms of biological role, in addition to its role as an aminoacyl-tRNA synthetase, has also cysteine persulfide synthase activity. Produces reactive persulfide species such as cysteine persulfide (CysSSH) from substrate cysteine and mediate direct incorporation of CysSSH into proteins during translations, resulting in protein persulfides and polysulfides. CysSSHs behave as potent antioxidants and cellular protectants. The polypeptide is Probable cysteine--tRNA ligase, mitochondrial (cars2) (Xenopus tropicalis (Western clawed frog)).